Here is a 799-residue protein sequence, read N- to C-terminus: High affinity nerve growth factor receptor (799 aa).

A signal peptide spans Met1–Ala33. The Extracellular segment spans residues Ala34 to Gly420. 2 disulfides stabilise this stretch: Cys36–Cys41 and Cys40–Cys50. An N-linked (GlcNAc...) asparagine glycan is attached at Asn67. LRR repeat units lie at residues Leu90–Phe113 and Arg116–Gly137. Asn121, Asn190, Asn204, Asn255, Asn264, Asn320, Asn325, Asn341, Asn361, and Asn404 each carry an N-linked (GlcNAc...) asparagine glycan. The LRRCT domain maps to Asn148–Val219. Cys154 and Cys193 form a disulfide bridge. Ig-like C2-type domains follow at residues Pro196–Ser285 and Asp205–Asn368. Cystine bridges form between Cys217–Cys267 and Cys302–Cys348. A helical membrane pass occupies residues Val421 to Val441. Topologically, residues Leu442–Gly799 are cytoplasmic. The tract at residues Met472–Ile493 is interaction with SQSTM1. Phosphotyrosine; by autocatalysis is present on Tyr499. The 272-residue stretch at Ile513 to Leu784 folds into the Protein kinase domain. Residues Leu519–Val527 and Lys547 contribute to the ATP site. The active-site Proton acceptor is Asp653. Phosphotyrosine; by autocatalysis is present on residues Tyr679, Tyr683, Tyr684, and Tyr794.

Belongs to the protein kinase superfamily. Tyr protein kinase family. Insulin receptor subfamily. In terms of assembly, exists in a dynamic equilibrium between monomeric (low affinity) and dimeric (high affinity) structures. Homodimerization is induced by binding of a NGF dimer. Found in a complex, at least composed of KIDINS220, MAGI2, NTRK1 and RAPGEF2; the complex is mainly formed at late endosomes in a nerve growth factor (NGF)-dependent manner. Interacts with RAPGEF2; the interaction is strengthened after NGF stimulation. Interacts with SQSTM1; bridges NTRK1 to NGFR. Forms a ternary complex with NGFR and KIDINS220; this complex is affected by the expression levels of KIDINS220 and an increase in KIDINS220 expression leads to a decreased association of NGFR and NTRK1. Interacts (phosphorylated upon activation by NGF) with SHC1; mediates SHC1 phosphorylation and activation. Interacts (phosphorylated upon activation by NGF) with PLCG1; mediates PLCG1 phosphorylation and activation. Interacts (phosphorylated) with SH2B1 and SH2B2. Interacts with GRB2. Interacts with PIK3R1. Interacts with FRS2. Interacts with SORT1; may regulate NTRK1 anterograde axonal transport. Interacts with SH2D1A; regulates NTRK1. Interacts with NRADD. Interacts with RAB7A. Interacts with PTPRS. Interacts with USP36; USP36 does not deubiquitinate NTRK1. Interacts with GGA3. Interacts with TSPAN1; this interaction promotes NTRK1 stability. In terms of processing, ligand-mediated autophosphorylation. Interaction with SQSTM1 is phosphotyrosine-dependent. Autophosphorylation at Tyr-499 mediates interaction and phosphorylation of SHC1. N-glycosylated. Post-translationally, ubiquitinated. Undergoes polyubiquitination upon activation; regulated by NGFR. Ubiquitination by NEDD4L leads to degradation. Ubiquitination regulates the internalization of the receptor.

Its subcellular location is the cell membrane. It is found in the early endosome membrane. The protein localises to the late endosome membrane. It localises to the recycling endosome membrane. The catalysed reaction is L-tyrosyl-[protein] + ATP = O-phospho-L-tyrosyl-[protein] + ADP + H(+). With respect to regulation, the pro-survival signaling effect of NTRK1 in neurons requires its endocytosis into signaling early endosomes and its retrograde axonal transport. This is regulated by different proteins including CFL1, RAC1 and SORT1. NTF3 is unable to induce this signaling probably due to the lability of the NTF3-NTRK1 complex in endosomes. SH2D1A inhibits the autophosphorylation of the receptor, and alters the recruitment and activation of downstream effectors and signaling cascades. Regulated by NGFR. Its function is as follows. Receptor tyrosine kinase involved in the development and the maturation of the central and peripheral nervous systems through regulation of proliferation, differentiation and survival of sympathetic and nervous neurons. High affinity receptor for NGF which is its primary ligand, it can also bind and be activated by NTF3/neurotrophin-3. However, NTF3 only supports axonal extension through NTRK1 but has no effect on neuron survival. Upon dimeric NGF ligand-binding, undergoes homodimerization, autophosphorylation and activation. Recruits, phosphorylates and/or activates several downstream effectors including SHC1, FRS2, SH2B1, SH2B2 and PLCG1 that regulate distinct overlapping signaling cascades driving cell survival and differentiation. Through SHC1 and FRS2 activates a GRB2-Ras-MAPK cascade that regulates cell differentiation and survival. Through PLCG1 controls NF-Kappa-B activation and the transcription of genes involved in cell survival. Through SHC1 and SH2B1 controls a Ras-PI3 kinase-AKT1 signaling cascade that is also regulating survival. In absence of ligand and activation, may promote cell death, making the survival of neurons dependent on trophic factors. The protein is High affinity nerve growth factor receptor (Ntrk1) of Mus musculus (Mouse).